Consider the following 161-residue polypeptide: Regulator of ribonuclease activity A (161 aa).

The protein belongs to the RraA family. As to quaternary structure, homotrimer. Binds to both RNA-binding sites in the C-terminal region of Rne and to RhlB.

Its subcellular location is the cytoplasm. Functionally, globally modulates RNA abundance by binding to RNase E (Rne) and regulating its endonucleolytic activity. Can modulate Rne action in a substrate-dependent manner by altering the composition of the degradosome. Modulates RNA-binding and helicase activities of the degradosome. The sequence is that of Regulator of ribonuclease activity A from Idiomarina loihiensis (strain ATCC BAA-735 / DSM 15497 / L2-TR).